Here is a 460-residue protein sequence, read N- to C-terminus: 2-methylcitrate synthase, mitochondrial (460 aa).

The N-terminal 24 residues, 1-24 (MALPLRTARHASRLAQTIGRRGYA), are a transit peptide targeting the mitochondrion. Arg69 and Lys187 together coordinate CoA. His264 serves as a coordination point for oxaloacetate. Leu299 is a binding site for CoA. His300 is an active-site residue. Positions 341, 343, and 344 each coordinate CoA. Residues His346 and Arg355 each coordinate oxaloacetate. Residue His346 is part of the active site. Residues Thr395, Lys396, and Asn401 each coordinate CoA. The active site involves Asp403. Positions 429 and 449 each coordinate oxaloacetate.

The protein belongs to the citrate synthase family. As to quaternary structure, homodimer.

It localises to the mitochondrion matrix. It carries out the reaction propanoyl-CoA + oxaloacetate + H2O = (2S,3S)-2-methylcitrate + CoA + H(+). The catalysed reaction is oxaloacetate + acetyl-CoA + H2O = citrate + CoA + H(+). It functions in the pathway organic acid metabolism; propanoate degradation. Partially inhibited by ATP. Catalyzes the synthesis of (2S,3S)-2-methylcitrate from propionyl-CoA and oxaloacetate and also from acetyl-CoA and oxaloacetate with a greater efficiency. Also has citrate synthase activity and can substitute for the loss of citA activity. This chain is 2-methylcitrate synthase, mitochondrial, found in Emericella nidulans (strain FGSC A4 / ATCC 38163 / CBS 112.46 / NRRL 194 / M139) (Aspergillus nidulans).